The primary structure comprises 118 residues: Na(+)/H(+) antiporter subunit G1 (118 aa).

Helical transmembrane passes span 4 to 24, 38 to 58, and 60 to 80; these read IILISLALIFVIIGALISALA, AHAAGKASTLGAMSLLFGTFL, and FIATQGFVNMQLIVAIIFVLI.

Belongs to the CPA3 antiporters (TC 2.A.63) subunit G family. In terms of assembly, may form a heterooligomeric complex that consists of seven subunits: mnhA1, mnhB1, mnhC1, mnhD1, mnhE1, mnhF1 and mnhG1.

It localises to the cell membrane. Mnh complex is a Na(+)/H(+) antiporter involved in Na(+) excretion. This chain is Na(+)/H(+) antiporter subunit G1 (mnhG1), found in Staphylococcus aureus (strain Mu3 / ATCC 700698).